The sequence spans 201 residues: MCIILIMHHGKIIILSGPSGVGKGSIEKLLLEDEKLKLKFSTSVTSRKPRVNEIEGKDYFFRSEEEFSELIKEKKFIEWSRHLNNYYGTLKSEVDKILGAKFNVLIEIETTGALNILKYYKKKNMLNDVISIFILPPRLEELETRILNRGSETKEEIKIRIKKAKKEIKLKNKFKYNLTNNFLHECVEEVKNILKREIHEI.

Residues 10 to 195 (GKIIILSGPS…CVEEVKNILK (186 aa)) enclose the Guanylate kinase-like domain. An ATP-binding site is contributed by 17 to 24 (GPSGVGKG).

This sequence belongs to the guanylate kinase family.

It localises to the cytoplasm. It catalyses the reaction GMP + ATP = GDP + ADP. Essential for recycling GMP and indirectly, cGMP. The protein is Guanylate kinase of Mycoplasma mobile (strain ATCC 43663 / 163K / NCTC 11711) (Mesomycoplasma mobile).